A 231-amino-acid polypeptide reads, in one-letter code: uncharacterized protein (231 aa).

A helical transmembrane segment spans residues 10 to 30 (SQNIFFIAIVIFILSSVILYH).

The protein resides in the membrane. This is an uncharacterized protein from Rickettsia prowazekii (strain Madrid E).